Consider the following 81-residue polypeptide: Short neurotoxin 1 (81 aa).

A signal peptide spans 1–21 (MKTLLLSPVVVTIVCLDLGYT). Disulfide bonds link cysteine 24/cysteine 43, cysteine 38/cysteine 60, cysteine 62/cysteine 73, and cysteine 74/cysteine 79.

Belongs to the three-finger toxin family. Short-chain subfamily. Type I alpha-neurotoxin sub-subfamily. Expressed by the venom gland.

Its subcellular location is the secreted. Its function is as follows. Binds to muscle nicotinic acetylcholine receptor (nAChR) and inhibit acetylcholine from binding to the receptor, thereby impairing neuromuscular transmission. This is Short neurotoxin 1 from Hydrophis peronii (Spiny-headed seasnake).